Here is an 860-residue protein sequence, read N- to C-terminus: Eukaryotic translation initiation factor 3 subunit C (860 aa).

Residues 1-76 (MSRFFYGNDS…SEESEEEDVV (76 aa)) form a disordered region. A compositionally biased stretch (acidic residues) spans 10-51 (SDSDSSGSDEEELYSDEEVEQSEEESSEEDASSEEESSEDED). The PCI domain occupies 599–773 (FHMHINLELL…DAIVFRKGVE (175 aa)). The segment at 812-860 (RDQGAGARGGRGPRGGGQARGGPRLPGGQQRRPGGQQFGGGALGGAIKA) is disordered. The segment covering 817 to 831 (GARGGRGPRGGGQAR) has biased composition (gly residues). The segment covering 832–846 (GGPRLPGGQQRRPGG) has biased composition (low complexity). A compositionally biased stretch (gly residues) spans 847 to 860 (QQFGGGALGGAIKA).

It belongs to the eIF-3 subunit C family. In terms of assembly, component of the eukaryotic translation initiation factor 3 (eIF-3) complex.

Its subcellular location is the cytoplasm. In terms of biological role, component of the eukaryotic translation initiation factor 3 (eIF-3) complex, which is involved in protein synthesis of a specialized repertoire of mRNAs and, together with other initiation factors, stimulates binding of mRNA and methionyl-tRNAi to the 40S ribosome. The eIF-3 complex specifically targets and initiates translation of a subset of mRNAs involved in cell proliferation. In Emericella nidulans (strain FGSC A4 / ATCC 38163 / CBS 112.46 / NRRL 194 / M139) (Aspergillus nidulans), this protein is Eukaryotic translation initiation factor 3 subunit C (nip1).